The primary structure comprises 551 residues: Hydroxylamine reductase (551 aa).

Positions 3, 6, 18, and 25 each coordinate [2Fe-2S] cluster. Residues His249, Glu273, Cys317, Cys405, Cys433, Cys459, Glu493, and Lys495 each coordinate hybrid [4Fe-2O-2S] cluster. Cys405 carries the cysteine persulfide modification.

Belongs to the HCP family. [2Fe-2S] cluster serves as cofactor. It depends on hybrid [4Fe-2O-2S] cluster as a cofactor.

The protein resides in the cytoplasm. It catalyses the reaction A + NH4(+) + H2O = hydroxylamine + AH2 + H(+). Functionally, catalyzes the reduction of hydroxylamine to form NH(3) and H(2)O. This chain is Hydroxylamine reductase, found in Actinobacillus pleuropneumoniae serotype 7 (strain AP76).